The chain runs to 788 residues: Ribonucleoside-diphosphate reductase subunit alpha (788 aa).

An ATP-cone domain is found at 2–92 (ITVVKRNGRI…LYDLYHKVSG (91 aa)). Residues Lys6, 12–18 (EPLDITK), and Thr52 each bind ATP. Thr200 serves as a coordination point for GDP. A disulfide bridge connects residues Cys216 and Cys497. Residues 223–225 (DNI) and Arg253 each bind dTTP. Asn424 lines the GDP pocket. Asn424 (proton acceptor) is an active-site residue. The active-site Cysteine radical intermediate is Cys426. Residues Glu428 and 661-663 (SSI) contribute to the GDP site. Glu428 serves as the catalytic Proton acceptor.

Belongs to the ribonucleoside diphosphate reductase large chain family. As to quaternary structure, tetramer of two alpha and two beta subunits.

It carries out the reaction a 2'-deoxyribonucleoside 5'-diphosphate + [thioredoxin]-disulfide + H2O = a ribonucleoside 5'-diphosphate + [thioredoxin]-dithiol. Under complex allosteric control mediated by deoxynucleoside triphosphates and ATP binding to separate specificity and activation sites on the alpha subunit. The type of nucleotide bound at the specificity site determines substrate preference. It seems probable that ATP makes the enzyme reduce CDP and UDP, dGTP favors ADP reduction and dTTP favors GDP reduction. Stimulated by ATP and inhibited by dATP binding to the activity site. Provides the precursors necessary for DNA synthesis. Catalyzes the biosynthesis of deoxyribonucleotides from the corresponding ribonucleotides. The chain is Ribonucleoside-diphosphate reductase subunit alpha (nrdA) from Helicobacter pylori (strain ATCC 700392 / 26695) (Campylobacter pylori).